The sequence spans 166 residues: MSEAIIAKKAELVDVVAEKMKAAASIVVVDARGLTVEQDTVLRRELRGSEVEYKVIKNSILRRAAEKAGLEDLASVFVGPSAVAFSNEDVIAPAKILNDFAKNADALEIKGGAIEGAVASKEEILALATLPNREGLLSMLLSVLQAPVRNVALAVKAVADNKEDAA.

Belongs to the universal ribosomal protein uL10 family. As to quaternary structure, part of the ribosomal stalk of the 50S ribosomal subunit. The N-terminus interacts with L11 and the large rRNA to form the base of the stalk. The C-terminus forms an elongated spine to which L12 dimers bind in a sequential fashion forming a multimeric L10(L12)X complex.

Forms part of the ribosomal stalk, playing a central role in the interaction of the ribosome with GTP-bound translation factors. The polypeptide is Large ribosomal subunit protein uL10 (Streptococcus gordonii (strain Challis / ATCC 35105 / BCRC 15272 / CH1 / DL1 / V288)).